A 24-amino-acid polypeptide reads, in one-letter code: Acetylcholine receptor subunit alpha (24 aa).

It belongs to the ligand-gated ion channel (TC 1.A.9) family. Acetylcholine receptor (TC 1.A.9.1) subfamily. Alpha-1/CHRNA1 sub-subfamily. In terms of assembly, one of the alpha chains that assemble within the acetylcholine receptor, a pentamer of two alpha chains, a beta, a delta, and a gamma or epsilon chains.

It is found in the postsynaptic cell membrane. The protein localises to the cell membrane. The enzyme catalyses K(+)(in) = K(+)(out). The catalysed reaction is Na(+)(in) = Na(+)(out). Its function is as follows. Upon acetylcholine binding, the AChR responds by an extensive change in conformation that affects all subunits and leads to opening of an ion-conducting channel across the plasma membrane. The chain is Acetylcholine receptor subunit alpha (chrna1) from Electrophorus electricus (Electric eel).